Here is a 505-residue protein sequence, read N- to C-terminus: Calcium/calmodulin-dependent protein kinase kinase 1 (505 aa).

The disordered stretch occupies residues 28–66 (LEEADEGPEPARNGVDPPPRARAASVIPGSASRPTPVRP). A phosphoserine mark is found at Ser67 and Ser74. An Asymmetric dimethylarginine modification is found at Arg78. The interval 84 to 105 (LGAQVGPYSTGPASHISPRSWR) is disordered. Ser100 carries the phosphoserine modification. Thr108 is modified (phosphothreonine). A Protein kinase domain is found at 128-409 (YKLQSEIGKG…VSDIKLHPWV (282 aa)). ATP-binding positions include 134-142 (IGKGAYGVV) and Lys157. Positions 167 to 189 (QYGFPRRPPPRGSQATQGGPAKQ) are RP domain. Residue Asp275 is the Proton acceptor of the active site. The autoinhibitory domain stretch occupies residues 435–440 (KNSVRL). Residues 438-463 (VRLIPSWTTVILVKSMLRKRSFGNPF) form a calmodulin-binding region. Ser458, Ser475, and Ser492 each carry phosphoserine. The tract at residues 460-505 (GNPFEPQARREERSMSAPGSLLMKEGCGEGCKSPELPGVQEDEAAS) is disordered.

This sequence belongs to the protein kinase superfamily. Ser/Thr protein kinase family. As to quaternary structure, interacts with CAMK4 and calmodulin. Appears to be autophosphorylated in a Ca(2+)/calmodulin-dependent manner. Phosphorylated at multiple sites by PRCAKA/PKA. Phosphorylation of Ser-458 is blocked upon binding to Ca(2+)/calmodulin. In vitro, phosphorylated by CAMK1 and CAMK4. As to expression, widely expressed. Differentially expressed in various brain regions.

Its subcellular location is the cytoplasm. It localises to the nucleus. The enzyme catalyses L-seryl-[protein] + ATP = O-phospho-L-seryl-[protein] + ADP + H(+). It carries out the reaction L-threonyl-[protein] + ATP = O-phospho-L-threonyl-[protein] + ADP + H(+). Its activity is regulated as follows. Activated by Ca(2+)/calmodulin. Binding of calmodulin may relieve intrasteric autoinhibition. Partially inhibited upon phosphorylation by PRCAKA/PKA. May be regulated through phosphorylation by CAMK1 and CAMK4. In terms of biological role, calcium/calmodulin-dependent protein kinase that belongs to a proposed calcium-triggered signaling cascade involved in a number of cellular processes. Phosphorylates CAMK1, CAMK1D, CAMK1G and CAMK4. Involved in regulating cell apoptosis. Promotes cell survival by phosphorylating AKT1/PKB that inhibits pro-apoptotic BAD/Bcl2-antagonist of cell death. The protein is Calcium/calmodulin-dependent protein kinase kinase 1 (Camkk1) of Mus musculus (Mouse).